A 534-amino-acid polypeptide reads, in one-letter code: Calcium-dependent protein kinase 18 (534 aa).

Residues 1–49 (MGLCFSSPKATRRGTGSRNPNPDSPTQGKASEKVSNKNKKNTKKIQLRH) are disordered. G2 is lipidated: N-myristoyl glycine. Over residues 14–29 (GTGSRNPNPDSPTQGK) the composition is skewed to polar residues. Basic residues predominate over residues 36 to 47 (NKNKKNTKKIQL). Residues 71–331 (YTIGKLLGHG…AAQALSHSWV (261 aa)) enclose the Protein kinase domain. ATP contacts are provided by residues 77–85 (LGHGQFGFT) and K100. Residue D197 is the Proton acceptor of the active site. S237 bears the Phosphoserine mark. Positions 337 to 367 (ASEVPIDISVLNNMRQFVKFSRLKQIALRAL) are autoinhibitory domain. EF-hand domains lie at 374–409 (DELDDLRDQFDAIDIDKNGSISLEEMRQALAKDVPW), 411–446 (LKDARVAEILQANDSNTDGLVDFTEFVVAALHVNQL), 453–488 (KWQQRSRAAFDKFDIDGDGFITPEELRLQTGLKGSI), and 491–518 (LLEEADVDEDGRISINEFRRLLRSASLK). Ca(2+) contacts are provided by D387, D389, N391, S393, E398, D424, N426, D428, E435, D466, D468, D470, E477, D496, D498, D500, and R502. Position 504 is a phosphoserine (S504). E507 lines the Ca(2+) pocket.

This sequence belongs to the protein kinase superfamily. Ser/Thr protein kinase family. CDPK subfamily.

It localises to the membrane. It catalyses the reaction L-seryl-[protein] + ATP = O-phospho-L-seryl-[protein] + ADP + H(+). The enzyme catalyses L-threonyl-[protein] + ATP = O-phospho-L-threonyl-[protein] + ADP + H(+). Activated by calcium. Autophosphorylation may play an important role in the regulation of the kinase activity. May play a role in signal transduction pathways that involve calcium as a second messenger. This is Calcium-dependent protein kinase 18 (CPK18) from Arabidopsis thaliana (Mouse-ear cress).